The primary structure comprises 156 residues: Small ribosomal subunit protein uS7 (156 aa).

Belongs to the universal ribosomal protein uS7 family. Part of the 30S ribosomal subunit. Contacts proteins S9 and S11.

One of the primary rRNA binding proteins, it binds directly to 16S rRNA where it nucleates assembly of the head domain of the 30S subunit. Is located at the subunit interface close to the decoding center, probably blocks exit of the E-site tRNA. The polypeptide is Small ribosomal subunit protein uS7 (Pseudoalteromonas translucida (strain TAC 125)).